A 176-amino-acid chain; its full sequence is Large ribosomal subunit protein uL10 (176 aa).

Belongs to the universal ribosomal protein uL10 family. As to quaternary structure, part of the ribosomal stalk of the 50S ribosomal subunit. The N-terminus interacts with L11 and the large rRNA to form the base of the stalk. The C-terminus forms an elongated spine to which L12 dimers bind in a sequential fashion forming a multimeric L10(L12)X complex.

Functionally, forms part of the ribosomal stalk, playing a central role in the interaction of the ribosome with GTP-bound translation factors. The polypeptide is Large ribosomal subunit protein uL10 (Nocardia farcinica (strain IFM 10152)).